Reading from the N-terminus, the 181-residue chain is Large ribosomal subunit protein uL6 (181 aa).

The protein belongs to the universal ribosomal protein uL6 family. In terms of assembly, part of the 50S ribosomal subunit.

This protein binds to the 23S rRNA, and is important in its secondary structure. It is located near the subunit interface in the base of the L7/L12 stalk, and near the tRNA binding site of the peptidyltransferase center. The protein is Large ribosomal subunit protein uL6 of Vesicomyosocius okutanii subsp. Calyptogena okutanii (strain HA).